The following is a 343-amino-acid chain: Glycogen biosynthesis protein GlgD (343 aa).

The protein belongs to the bacterial/plant glucose-1-phosphate adenylyltransferase family.

In terms of biological role, required for the synthesis of glycogen. The sequence is that of Glycogen biosynthesis protein GlgD (glgD) from Bacillus subtilis (strain 168).